The chain runs to 90 residues: Probable Fe(2+)-trafficking protein (90 aa).

Belongs to the Fe(2+)-trafficking protein family.

Its function is as follows. Could be a mediator in iron transactions between iron acquisition and iron-requiring processes, such as synthesis and/or repair of Fe-S clusters in biosynthetic enzymes. The chain is Probable Fe(2+)-trafficking protein from Vibrio campbellii (strain ATCC BAA-1116).